We begin with the raw amino-acid sequence, 305 residues long: UDP-3-O-acyl-N-acetylglucosamine deacetylase (305 aa).

Residues His79, His238, and Asp242 each contribute to the Zn(2+) site. The active-site Proton donor is the His265.

Belongs to the LpxC family. The cofactor is Zn(2+).

It carries out the reaction a UDP-3-O-[(3R)-3-hydroxyacyl]-N-acetyl-alpha-D-glucosamine + H2O = a UDP-3-O-[(3R)-3-hydroxyacyl]-alpha-D-glucosamine + acetate. The protein operates within glycolipid biosynthesis; lipid IV(A) biosynthesis; lipid IV(A) from (3R)-3-hydroxytetradecanoyl-[acyl-carrier-protein] and UDP-N-acetyl-alpha-D-glucosamine: step 2/6. Catalyzes the hydrolysis of UDP-3-O-myristoyl-N-acetylglucosamine to form UDP-3-O-myristoylglucosamine and acetate, the committed step in lipid A biosynthesis. The polypeptide is UDP-3-O-acyl-N-acetylglucosamine deacetylase (Erwinia tasmaniensis (strain DSM 17950 / CFBP 7177 / CIP 109463 / NCPPB 4357 / Et1/99)).